Consider the following 241-residue polypeptide: Small ribosomal subunit protein uS2 (241 aa).

Belongs to the universal ribosomal protein uS2 family.

This Proteus mirabilis (strain HI4320) protein is Small ribosomal subunit protein uS2.